The primary structure comprises 144 residues: UPF0102 protein BMA2801 (144 aa).

Positions 1 to 28 (MCHAREASPGTGEPEAAPRDNFPRAAGS) are disordered.

It belongs to the UPF0102 family.

The polypeptide is UPF0102 protein BMA2801 (Burkholderia mallei (strain ATCC 23344)).